Consider the following 254-residue polypeptide: tRNA pseudouridine synthase A (254 aa).

The active-site Nucleophile is the aspartate 52. Substrate is bound at residue tyrosine 111.

Belongs to the tRNA pseudouridine synthase TruA family. As to quaternary structure, homodimer.

It catalyses the reaction uridine(38/39/40) in tRNA = pseudouridine(38/39/40) in tRNA. Formation of pseudouridine at positions 38, 39 and 40 in the anticodon stem and loop of transfer RNAs. The polypeptide is tRNA pseudouridine synthase A (Methylobacterium nodulans (strain LMG 21967 / CNCM I-2342 / ORS 2060)).